The chain runs to 96 residues: MLMMYMLFIMMKTYPMLSYHMMSYHIMLYTIMWYMKYSTYMRLWLLYKSYFIFIFIWTNNNYNNNYWYVTMLMNTYLYYNMNIHFLTINKKFLYSL.

The protein localises to the mitochondrion. This is an uncharacterized protein from Saccharomyces cerevisiae (strain ATCC 204508 / S288c) (Baker's yeast).